A 1286-amino-acid polypeptide reads, in one-letter code: ABC transporter B family member 1 (1286 aa).

The next 2 membrane-spanning stretches (helical) occupy residues 42 to 62 (VLMG…PLFL) and 93 to 113 (FLVV…CWMW). The 290-residue stretch at 44–333 (MGIGSVGAFV…SAPSMAAFAK (290 aa)) folds into the ABC transmembrane type-1 1 domain. D139 lines the ATP pocket. Transmembrane regions (helical) follow at residues 166–186 (LGNF…GFTA) and 187–207 (VWQL…IGGI). A glycan (N-linked (GlcNAc...) asparagine) is linked at N217. Helical transmembrane passes span 277-297 (ATYF…GYLV) and 301-321 (LTNG…GLAL). Brassinolide is bound at residue Y286. The ABC transporter 1 domain maps to 368 to 604 (VELKNVDFSY…GENGVYAKLI (237 aa)). Positions 377, 379, 380, 408, 409, 410, and 411 each coordinate ATP. A disordered region spans residues 614–647 (AMSNARKSSARPSSARNSVSSPIMTRNSSYGRSP). The span at 616 to 635 (SNARKSSARPSSARNSVSSP) shows a compositional bias: low complexity. The N-linked (GlcNAc...) asparagine glycan is linked to N640. The ABC transmembrane type-1 2 domain maps to 700-988 (ALLGSVGSVI…TLTLAPDFIK (289 aa)). 2 helical membrane passes run 705-725 (VGSV…SAVL) and 745-765 (YLLI…HSFW). N771 carries N-linked (GlcNAc...) asparagine glycosylation. Residue D793 coordinates ATP. N-linked (GlcNAc...) asparagine glycosylation is present at N797. Helical transmembrane passes span 821–843 (ISVI…VLQW), 845–867 (LALV…KMFM), 932–952 (VAQF…SWLV), and 967–987 (MVLM…PDFI). Brassinolide contacts are provided by Y941 and E978. The ABC transporter 2 domain maps to 1024–1260 (VELKHIDFSY…HPDGIYARMI (237 aa)). ATP-binding residues include Y1033, R1036, G1064, K1065, and S1066. Residues 1049–1286 (ARAGKTLALV…SSSRVKEDDA (238 aa)) form an interaction with FKBP42/TWD1 region.

Belongs to the ABC transporter superfamily. ABCB family. Multidrug resistance exporter (TC 3.A.1.201) subfamily. As to quaternary structure, interacts with 1-naphthylphthalamic acid (NPA) and FKBP42/TWD1. As to expression, ubiquitous, with high levels in peduncles. Mostly localized in young developing tissues, including meristems, as well as root and shoot apices.

Its subcellular location is the cell membrane. It carries out the reaction (indol-3-yl)acetate(in) + ATP + H2O = (indol-3-yl)acetate(out) + ADP + phosphate + H(+). It catalyses the reaction brassinolide(in) + ATP + H2O = brassinolide(out) + ADP + phosphate + H(+). The catalysed reaction is 24-epi-brassinolide(in) + ATP + H2O = 24-epi-brassinolide(out) + ADP + phosphate + H(+). The enzyme catalyses 24-epi-castasterone(in) + ATP + H2O = 24-epi-castasterone(out) + ADP + phosphate + H(+). It carries out the reaction castasterone(in) + ATP + H2O = castasterone(out) + ADP + phosphate + H(+). Transport capacity is stimulated by the chaperone protein FKBP42/TWD1. Transport activity inhibited by 1-N-naphthylphthalamic acid (NPA), cyclopropyl propane dione (CPD), cyclosporin A, verapamil and quercetin. ATPase activity is specifically activated by bioactive brassinosteroids in a dose-dependent manner, including brassinolide (BL), 24-epiBL, 24-epicastasterone (24-epiCS) and castasterone-alkyne; BL binding leads to structural changes. Inhibited by vanadate. Functionally, brassinosteroid exporter that, in conjunction with ABCB19, supports the accumulation of exogenous brassinosteroids (BR) in the apoplast, thus promoting BR signaling initiation involving the specific receptor BRI1 and required for plant growth and stress responses. Auxin efflux transporter that acts as a negative regulator of light signaling to promote hypocotyl elongation. May contribute to the regulation of leaf position and morphology during PHOT1-mediated blue light responses involving auxin distribution, especially in low light fluence. Together with ABCB19 and in a FKBP42/TWD1-dependent manner, supports seed development by promoting stamen elongation and, to a lesser extent, anther dehiscence and pollen maturation, probably as auxin transporters. Mediates the accumulation of chlorophyll and anthocyanin, as well as the expression of genes in response to light. Participates directly in auxin efflux and thus regulates the polar (presumably basipetal) auxin transport (from root tips to root elongating zone). Also transports some auxin metabolites such as oxindoleacetic acid and indoleacetaldehyde. Involved in diverse auxin-mediated responses including gravitropism, phototropism and lateral root formation. Confers resistance to herbicides such as dicamba, pendimethalin, oryzalin, and monosodium acid methanearsonate (MSMA), but not to herbicides such as glyphosate, atrazine, bentazon and fluazifop-p-butyl. Also mediates resistance to xenobiotics such as cycloheximide and the cytokinin N6-(2-isopentenyl)adenine (2IP). This Arabidopsis thaliana (Mouse-ear cress) protein is ABC transporter B family member 1.